A 189-amino-acid chain; its full sequence is Mediator of RNA polymerase II transcription subunit 30 (189 aa).

Residues 138 to 178 are a coiled coil; it reads SPESEDEIEKLEEQALSLRMEIAKKNVHVKELIDKLRELIA.

It belongs to the plant Mediator complex subunit 30 family. In terms of assembly, component of the Mediator complex.

Its subcellular location is the nucleus. Functionally, component of the Mediator complex, a coactivator involved in the regulated transcription of nearly all RNA polymerase II-dependent genes. Mediator functions as a bridge to convey information from gene-specific regulatory proteins to the basal RNA polymerase II transcription machinery. The Mediator complex, having a compact conformation in its free form, is recruited to promoters by direct interactions with regulatory proteins and serves for the assembly of a functional preinitiation complex with RNA polymerase II and the general transcription factors. This chain is Mediator of RNA polymerase II transcription subunit 30 (MED30), found in Arabidopsis thaliana (Mouse-ear cress).